The sequence spans 156 residues: uncharacterized protein (156 aa).

This is an uncharacterized protein from Aedes vexans (Inland floodwater mosquito).